We begin with the raw amino-acid sequence, 337 residues long: uncharacterized protein (337 aa).

Residues 12–60 (SLNYVDLPDTVHRKIFEYLNPWEIFKLSRISKAIHVTILKNKKFAVKDI) form the F-box domain.

This is an uncharacterized protein from Caenorhabditis elegans.